A 243-amino-acid polypeptide reads, in one-letter code: Carboxy-S-adenosyl-L-methionine synthase (243 aa).

Residues Tyr40, 65–67, 90–91, 118–119, Asn133, and Arg200 contribute to the S-adenosyl-L-methionine site; these read GCS, DN, and DI.

Belongs to the class I-like SAM-binding methyltransferase superfamily. Cx-SAM synthase family. As to quaternary structure, homodimer.

The enzyme catalyses prephenate + S-adenosyl-L-methionine = carboxy-S-adenosyl-L-methionine + 3-phenylpyruvate + H2O. In terms of biological role, catalyzes the conversion of S-adenosyl-L-methionine (SAM) to carboxy-S-adenosyl-L-methionine (Cx-SAM). The polypeptide is Carboxy-S-adenosyl-L-methionine synthase (Shewanella piezotolerans (strain WP3 / JCM 13877)).